Here is a 305-residue protein sequence, read N- to C-terminus: D-alanine--D-alanine ligase (305 aa).

The ATP-grasp domain maps to 104–300; it reads RALFASAGIP…FPELVRWMVE (197 aa). Residue 131-181 participates in ATP binding; that stretch reads LPRPFVVKPLNEGSSVGVFIVRDNQPSPLPDWPFDADEVLVESFIPGRELT. Residues D249, E267, and N269 each contribute to the Mg(2+) site.

This sequence belongs to the D-alanine--D-alanine ligase family. The cofactor is Mg(2+). It depends on Mn(2+) as a cofactor.

It is found in the cytoplasm. The catalysed reaction is 2 D-alanine + ATP = D-alanyl-D-alanine + ADP + phosphate + H(+). The protein operates within cell wall biogenesis; peptidoglycan biosynthesis. Its function is as follows. Cell wall formation. The sequence is that of D-alanine--D-alanine ligase from Paramagnetospirillum magneticum (strain ATCC 700264 / AMB-1) (Magnetospirillum magneticum).